Consider the following 349-residue polypeptide: Phenylalanine--tRNA ligase alpha subunit (349 aa).

Glu258 is a binding site for Mg(2+).

The protein belongs to the class-II aminoacyl-tRNA synthetase family. Phe-tRNA synthetase alpha subunit type 1 subfamily. As to quaternary structure, tetramer of two alpha and two beta subunits. Mg(2+) is required as a cofactor.

The protein localises to the cytoplasm. The catalysed reaction is tRNA(Phe) + L-phenylalanine + ATP = L-phenylalanyl-tRNA(Phe) + AMP + diphosphate + H(+). The chain is Phenylalanine--tRNA ligase alpha subunit from Rickettsia africae (strain ESF-5).